Reading from the N-terminus, the 86-residue chain is Large ribosomal subunit protein bL27 (86 aa).

The interval 1–21 (MAHHKGGGSSRNGKDSNPQYL) is disordered.

Belongs to the bacterial ribosomal protein bL27 family.

This chain is Large ribosomal subunit protein bL27, found in Coprothermobacter proteolyticus (strain ATCC 35245 / DSM 5265 / OCM 4 / BT).